The primary structure comprises 839 residues: Autophagy-related protein 9A (839 aa).

Position 2 is an N-acetylalanine (Ala2). The Cytoplasmic portion of the chain corresponds to 2-61 (AQFDTEYQRLEASYSDSPPGEEDLLVHVAEGSKSPWHHIENLDLFFSRVYNLHQKNGFTC). Residues 8-11 (YQRL) carry the Tyrosine-based sorting signal motif. Phosphoserine is present on residues Ser14, Ser16, and Ser18. The chain crosses the membrane as a helical span at residues 62-84 (MLIGEIFELMQFLFVVAFTTFLV). Residues 85-128 (SCVDYDILFANKMVNHSLHPTEPVKVTLPDAFLPAQVCSARIQE) lie on the Lumenal side of the membrane. Residue Asn99 is glycosylated (N-linked (GlcNAc...) asparagine). Residues 129-154 (NGSLITILVIAGVFWIHRLIKFIYNI) traverse the membrane as a helical segment. Residues 155-290 (CCYWEIHSFY…ELAQRLSNRI (136 aa)) lie on the Cytoplasmic side of the membrane. An intramembrane segment occupies 291 to 301 (LWIGIANFLLC). At 302–319 (PLILIWQILYAFFSYAEV) the chain is on the cytoplasmic side. The stretch at 320 to 328 (LKREPGALG) is an intramembrane region. Over 329 to 371 (ARCWSLYGRCYLRHFNELEHELQSRLNRGYKPASKYMNCFLSP) the chain is Cytoplasmic. A helical membrane pass occupies residues 372–397 (LLTLLAKNGAFFAGSILAVLIALTIY). Topologically, residues 398 to 406 (DEDVLAVEH) are lumenal. The chain crosses the membrane as a helical span at residues 407–424 (VLTTVTLLGVTVTVCRSF). Residues 425-470 (IPDQHMVFCPEQLLRVILAHIHYMPDHWQGNAHRSQTRDEFAQLFQ) lie on the Cytoplasmic side of the membrane. An intramembrane segment occupies 471–480 (YKAVFILEEL). The Cytoplasmic portion of the chain corresponds to 481 to 483 (LSP). Residues 484–492 (IVTPLILIF) lie within the membrane without spanning it. The Cytoplasmic portion of the chain corresponds to 493-839 (CLRPRALEII…DELPPQVHKV (347 aa)). Ser656, Ser735, Ser738, Ser741, and Ser828 each carry phosphoserine. Disordered regions lie at residues 656–689 (SPLQ…SSVW) and 717–839 (HKQQ…VHKV). Positions 724–736 (EPERHVWHRRESD) are enriched in basic and acidic residues. Acidic residues-rich tracts occupy residues 737–747 (ESGESAPEEGG) and 823–832 (VPEEGSEDEL).

Belongs to the ATG9 family. In terms of assembly, homotrimer; forms a homotrimer with a central pore that forms a path between the two membrane leaflets. Interacts (via cytoplasmic its C-terminus) with ATG2A. Interacts with SUPT20H. Interacts (via the tyrosine-based sorting signal motif) with AP4M1; promoting association with the AP-4 complex. Interacts with ARFIP1 and ARFIP2. Interacts with PI4K2A and PI4KB. Interacts with ATG4A; the interaction is direct and promotes ATG9A trafficking. Ufmylated in a DDRGK1 dependent manner.

It is found in the preautophagosomal structure membrane. The protein localises to the cytoplasmic vesicle. The protein resides in the autophagosome membrane. Its subcellular location is the golgi apparatus. It localises to the trans-Golgi network membrane. It is found in the late endosome membrane. The protein localises to the recycling endosome membrane. The protein resides in the endoplasmic reticulum membrane. Its subcellular location is the mitochondrion membrane. It carries out the reaction a 1,2-diacyl-sn-glycero-3-phosphocholine(in) = a 1,2-diacyl-sn-glycero-3-phosphocholine(out). The catalysed reaction is a 1,2-diacyl-sn-glycero-3-phospho-L-serine(in) = a 1,2-diacyl-sn-glycero-3-phospho-L-serine(out). It catalyses the reaction a 1,2-diacyl-sn-glycero-3-phosphoethanolamine(in) = a 1,2-diacyl-sn-glycero-3-phosphoethanolamine(out). Functionally, phospholipid scramblase involved in autophagy by mediating autophagosomal membrane expansion. Cycles between the preautophagosomal structure/phagophore assembly site (PAS) and the cytoplasmic vesicle pool and supplies membrane for the growing autophagosome. Lipid scramblase activity plays a key role in preautophagosomal structure/phagophore assembly by distributing the phospholipids that arrive through ATG2 (ATG2A or ATG2B) from the cytoplasmic to the luminal leaflet of the bilayer, thereby driving autophagosomal membrane expansion. Also required to supply phosphatidylinositol 4-phosphate to the autophagosome initiation site by recruiting the phosphatidylinositol 4-kinase beta (PI4KB) in a process dependent on ARFIP2, but not ARFIP1. In addition to autophagy, also plays a role in necrotic cell death. This Rattus norvegicus (Rat) protein is Autophagy-related protein 9A.